Consider the following 323-residue polypeptide: Acetyl esterase (323 aa).

An Involved in the stabilization of the negatively charged intermediate by the formation of the oxyanion hole motif is present at residues 91 to 93 (HGG). Active-site residues include Ser165, Asp262, and His292.

It belongs to the 'GDXG' lipolytic enzyme family. In terms of assembly, homodimer. Interacts with MalT and MelA.

It localises to the cytoplasm. Its function is as follows. Displays esterase activity towards short chain fatty esters (acyl chain length of up to 8 carbons). Able to hydrolyze triacetylglycerol (triacetin) and tributyrylglycerol (tributyrin), but not trioleylglycerol (triolein) or cholesterol oleate. Negatively regulates MalT activity by antagonizing maltotriose binding. Inhibits MelA galactosidase activity. The chain is Acetyl esterase from Salmonella choleraesuis (strain SC-B67).